Consider the following 427-residue polypeptide: Trigger factor (427 aa).

The PPIase FKBP-type domain occupies 160 to 240 (TDTVIGDVVK…VKEVKRLELP (81 aa)).

Belongs to the FKBP-type PPIase family. Tig subfamily.

The protein resides in the cytoplasm. It catalyses the reaction [protein]-peptidylproline (omega=180) = [protein]-peptidylproline (omega=0). Involved in protein export. Acts as a chaperone by maintaining the newly synthesized protein in an open conformation. Functions as a peptidyl-prolyl cis-trans isomerase. This is Trigger factor from Chlorobium limicola (strain DSM 245 / NBRC 103803 / 6330).